We begin with the raw amino-acid sequence, 406 residues long: MKAVIFIMDGLGDRPNKDGNTPLKEAKTPIMDKMAKDGICGLMNAVDVGVRPGSDTAHLAILGYDPYTTYTGRGPFEACGVGVTVKPGDIAFRCNFSSVDENFIVTDRRAGRIENTSELEKELDGLKIDDVEIIFKESGGYRAALVLRGPGLSDRISDADPKKEGKRVKEIHPLDDSKEAKKTAEIVNRLLKIAYEKLDKHPVNEERRKQNLPVANMIVPRGVGQVPEIMPFTEKTGLKGACIAGTGLIKGIAKMVGLDVIDVEGCDGTPNSDLMAKACAIVETLKNYDFILVNVKGADEAGHDGNYELKKEIIERIDEMLDYITKNISKDEVYFVISGDHSTPIEEMDHSADPLPIVIWGKSVRVDDVEKFDEFSTHKGGLNWIKGTNIMPILMDLMSIAKKYGA.

It belongs to the BPG-independent phosphoglycerate mutase family. A-PGAM subfamily.

The catalysed reaction is (2R)-2-phosphoglycerate = (2R)-3-phosphoglycerate. Its pathway is carbohydrate degradation; glycolysis; pyruvate from D-glyceraldehyde 3-phosphate: step 3/5. Catalyzes the interconversion of 2-phosphoglycerate and 3-phosphoglycerate. In Methanococcus maripaludis (strain C7 / ATCC BAA-1331), this protein is 2,3-bisphosphoglycerate-independent phosphoglycerate mutase.